Reading from the N-terminus, the 141-residue chain is MSIVIGADAAGLRLKEVVKDFLEKENFHLVDVTAEGQDFVDVTLAVAAEVNKEEQNLGIVIDAYGAGPFMVATKIKGMVAAEVSDERSAYMTRGHNNSRMITMGAQLVGDELAKNIAKGFVNGKYDGGRHQIRVDMLNKMC.

The protein belongs to the LacAB/RpiB family. As to quaternary structure, heteromultimeric protein consisting of LacA and LacB.

The enzyme catalyses aldehydo-D-galactose 6-phosphate = keto-D-tagatose 6-phosphate. The protein operates within carbohydrate metabolism; D-galactose 6-phosphate degradation; D-tagatose 6-phosphate from D-galactose 6-phosphate: step 1/1. This chain is Galactose-6-phosphate isomerase subunit LacA, found in Streptococcus pneumoniae (strain P1031).